A 120-amino-acid polypeptide reads, in one-letter code: NAD(P)H-quinone oxidoreductase subunit 3, chloroplastic (120 aa).

3 helical membrane passes run 7–27, 63–83, and 89–109; these read YDSF…AFSI, YMFA…YPWA, and LGLF…VGLV.

Belongs to the complex I subunit 3 family. NDH is composed of at least 16 different subunits, 5 of which are encoded in the nucleus.

The protein resides in the plastid. It localises to the chloroplast thylakoid membrane. It carries out the reaction a plastoquinone + NADH + (n+1) H(+)(in) = a plastoquinol + NAD(+) + n H(+)(out). The enzyme catalyses a plastoquinone + NADPH + (n+1) H(+)(in) = a plastoquinol + NADP(+) + n H(+)(out). Functionally, NDH shuttles electrons from NAD(P)H:plastoquinone, via FMN and iron-sulfur (Fe-S) centers, to quinones in the photosynthetic chain and possibly in a chloroplast respiratory chain. The immediate electron acceptor for the enzyme in this species is believed to be plastoquinone. Couples the redox reaction to proton translocation, and thus conserves the redox energy in a proton gradient. The chain is NAD(P)H-quinone oxidoreductase subunit 3, chloroplastic from Adiantum capillus-veneris (Maidenhair fern).